Consider the following 130-residue polypeptide: Small ribosomal subunit protein uS8 (130 aa).

This sequence belongs to the universal ribosomal protein uS8 family. In terms of assembly, part of the 30S ribosomal subunit. Contacts proteins S5 and S12.

Its function is as follows. One of the primary rRNA binding proteins, it binds directly to 16S rRNA central domain where it helps coordinate assembly of the platform of the 30S subunit. This is Small ribosomal subunit protein uS8 from Psychromonas ingrahamii (strain DSM 17664 / CCUG 51855 / 37).